The following is a 344-amino-acid chain: D-beta-hydroxybutyrate dehydrogenase, mitochondrial (344 aa).

The transit peptide at 1-46 (MLTARLSRPLSQLPRKTLNFSDRENGTRGSLLLYSAPFVPVGRRTY) directs the protein to the mitochondrion. NAD(+) is bound at residue 59 to 83 (LITGCDSGFGFSLAKHLHSEGFLVF). N6-acetyllysine is present on residues lysine 73 and lysine 97. At lysine 103 the chain carries N6-acetyllysine; alternate. Lysine 103 is modified (N6-succinyllysine; alternate). Lysine 177 carries the N6-acetyllysine modification. Residue serine 195 coordinates substrate. The active-site Proton acceptor is tyrosine 208. Lysine 212 carries the N6-acetyllysine modification. Serine 219 is a glycosylation site (O-linked (GlcNAc) serine). The residue at position 246 (serine 246) is a Phosphoserine. Residue lysine 260 is modified to N6-acetyllysine; alternate. Residue lysine 260 is modified to N6-succinyllysine; alternate. Position 281 is an N6-acetyllysine (lysine 281).

Belongs to the short-chain dehydrogenases/reductases (SDR) family. In terms of assembly, homotetramer.

It localises to the mitochondrion inner membrane. Its subcellular location is the mitochondrion matrix. It catalyses the reaction (R)-3-hydroxybutanoate + NAD(+) = acetoacetate + NADH + H(+). Its activity is regulated as follows. Requires phosphatidylcholine as an allosteric activator for enzymatic activity. The chain is D-beta-hydroxybutyrate dehydrogenase, mitochondrial from Bos taurus (Bovine).